Consider the following 208-residue polypeptide: Uracil phosphoribosyltransferase (208 aa).

5-phospho-alpha-D-ribose 1-diphosphate-binding positions include R78, R103, and 130–138 (DPMLATGGS). Uracil-binding positions include I193 and 198–200 (GDA). D199 provides a ligand contact to 5-phospho-alpha-D-ribose 1-diphosphate.

Belongs to the UPRTase family. The cofactor is Mg(2+).

The enzyme catalyses UMP + diphosphate = 5-phospho-alpha-D-ribose 1-diphosphate + uracil. The protein operates within pyrimidine metabolism; UMP biosynthesis via salvage pathway; UMP from uracil: step 1/1. Allosterically activated by GTP. In terms of biological role, catalyzes the conversion of uracil and 5-phospho-alpha-D-ribose 1-diphosphate (PRPP) to UMP and diphosphate. The protein is Uracil phosphoribosyltransferase of Thermus thermophilus (strain ATCC 27634 / DSM 579 / HB8).